The primary structure comprises 25 residues: C-reactive protein P2 subunit 4 (25 aa).

Residues 1-25 (GRSLVFPEETANSFVELFPAKELSL) form the Pentraxin (PTX) domain.

The protein belongs to the pentraxin family. As to quaternary structure, heteropentamer. Discoid arrangement of 5 non-covalently bound subunits 1, 2, 3 and 4. Requires Ca(2+) as cofactor. Post-translationally, glycosylated.

The protein resides in the secreted. Functionally, displays several functions associated with host defense: it promotes agglutination, bacterial capsular swelling, phagocytosis, and complement fixation through its calcium-dependent binding to phosphorylcholine. This Gadus morhua (Atlantic cod) protein is C-reactive protein P2 subunit 4.